The sequence spans 237 residues: Orotidine 5'-phosphate decarboxylase (237 aa).

Residues aspartate 11, lysine 34, 61–70, threonine 124, arginine 186, glutamine 195, glycine 215, and arginine 216 each bind substrate; that span reads DLKLHDIPNT. Lysine 63 serves as the catalytic Proton donor.

Belongs to the OMP decarboxylase family. Type 1 subfamily. Homodimer.

It catalyses the reaction orotidine 5'-phosphate + H(+) = UMP + CO2. It functions in the pathway pyrimidine metabolism; UMP biosynthesis via de novo pathway; UMP from orotate: step 2/2. Its function is as follows. Catalyzes the decarboxylation of orotidine 5'-monophosphate (OMP) to uridine 5'-monophosphate (UMP). The protein is Orotidine 5'-phosphate decarboxylase of Lactococcus lactis subsp. lactis (strain IL1403) (Streptococcus lactis).